A 379-amino-acid chain; its full sequence is Chaperone protein DnaJ (379 aa).

The region spanning 4-69 is the J domain; the sequence is DLYETLGVQK…QKRAAYDRYG (66 aa). The segment at 137-215 adopts a CR-type zinc-finger fold; sequence GKTAQIRVPT…CHGQGRVVEE (79 aa). Residues cysteine 150, cysteine 153, cysteine 167, cysteine 170, cysteine 189, cysteine 192, cysteine 203, and cysteine 206 each contribute to the Zn(2+) site. CXXCXGXG motif repeat units follow at residues 150 to 157, 167 to 174, 189 to 196, and 203 to 210; these read CDVCTGTG, CGTCQGTG, CPTCGGRG, and CTKCHGQG.

This sequence belongs to the DnaJ family. In terms of assembly, homodimer. Zn(2+) is required as a cofactor.

It localises to the cytoplasm. Functionally, participates actively in the response to hyperosmotic and heat shock by preventing the aggregation of stress-denatured proteins and by disaggregating proteins, also in an autonomous, DnaK-independent fashion. Unfolded proteins bind initially to DnaJ; upon interaction with the DnaJ-bound protein, DnaK hydrolyzes its bound ATP, resulting in the formation of a stable complex. GrpE releases ADP from DnaK; ATP binding to DnaK triggers the release of the substrate protein, thus completing the reaction cycle. Several rounds of ATP-dependent interactions between DnaJ, DnaK and GrpE are required for fully efficient folding. Also involved, together with DnaK and GrpE, in the DNA replication of plasmids through activation of initiation proteins. The sequence is that of Chaperone protein DnaJ from Rhizobium meliloti (strain 1021) (Ensifer meliloti).